We begin with the raw amino-acid sequence, 160 residues long: Protein FrzA (160 aa).

Residues 14 to 155 (EQEFFCFRVG…FSKLLQTARQ (142 aa)) enclose the CheW-like domain.

Its function is as follows. Necessary for proper aggregation of cells to form fruiting bodies. FRZ genes define a system of signal transduction analogous to the enterobacterial chemotaxis systems. This is Protein FrzA (frzA) from Myxococcus xanthus.